The following is a 272-amino-acid chain: S-adenosylmethionine decarboxylase proenzyme (272 aa).

Catalysis depends on Ser117, which acts as the Schiff-base intermediate with substrate; via pyruvic acid. A Pyruvic acid (Ser); by autocatalysis modification is found at Ser117. The Proton acceptor; for processing activity role is filled by His122. The active-site Proton donor; for catalytic activity is the Cys145.

It belongs to the prokaryotic AdoMetDC family. Type 2 subfamily. As to quaternary structure, heterooctamer of four alpha and four beta chains arranged as a tetramer of alpha/beta heterodimers. Requires pyruvate as cofactor. Post-translationally, is synthesized initially as an inactive proenzyme. Formation of the active enzyme involves a self-maturation process in which the active site pyruvoyl group is generated from an internal serine residue via an autocatalytic post-translational modification. Two non-identical subunits are generated from the proenzyme in this reaction, and the pyruvate is formed at the N-terminus of the alpha chain, which is derived from the carboxyl end of the proenzyme. The post-translation cleavage follows an unusual pathway, termed non-hydrolytic serinolysis, in which the side chain hydroxyl group of the serine supplies its oxygen atom to form the C-terminus of the beta chain, while the remainder of the serine residue undergoes an oxidative deamination to produce ammonia and the pyruvoyl group blocking the N-terminus of the alpha chain.

The enzyme catalyses S-adenosyl-L-methionine + H(+) = S-adenosyl 3-(methylsulfanyl)propylamine + CO2. The protein operates within amine and polyamine biosynthesis; S-adenosylmethioninamine biosynthesis; S-adenosylmethioninamine from S-adenosyl-L-methionine: step 1/1. Catalyzes the decarboxylation of S-adenosylmethionine to S-adenosylmethioninamine (dcAdoMet), the propylamine donor required for the synthesis of the polyamines spermine and spermidine from the diamine putrescine. This Halorhodospira halophila (strain DSM 244 / SL1) (Ectothiorhodospira halophila (strain DSM 244 / SL1)) protein is S-adenosylmethionine decarboxylase proenzyme.